A 456-amino-acid polypeptide reads, in one-letter code: TGACG-sequence-specific DNA-binding protein TGA-2.1 (456 aa).

Disordered regions lie at residues 1 to 41 (MASK…NTSR) and 115 to 170 (SASG…QKTL). Polar residues-rich tracts occupy residues 9–41 (GNRS…NTSR) and 125–141 (GESN…TSTD). The span at 158–169 (DKSKEKVLDQKT) shows a compositional bias: basic and acidic residues. The region spanning 166–229 (DQKTLRRLAQ…NIADQSNGVG (64 aa)) is the bZIP domain. A coiled-coil region spans residues 167–220 (QKTLRRLAQNREAARKSRLRKKAYVQQLENSRLKLSQLEQDLQRARQQGKYISN). The segment at 168–188 (KTLRRLAQNREAARKSRLRKK) is basic motif. The segment at 194–208 (LENSRLKLSQLEQDL) is leucine-zipper. The 218-residue stretch at 233-450 (PLAFDAEYSR…RALSSLWLAR (218 aa)) folds into the DOG1 domain.

The protein belongs to the bZIP family. Can form heterodimer with TGA2.2.

The protein resides in the nucleus. Its function is as follows. Transcriptional activator that binds specifically to the DNA sequence 5'-TGACG-3'. Recognizes ocs elements like the as-1 motif of the cauliflower mosaic virus 35S promoter. Binding to the as-1-like cis elements mediate auxin- and salicylic acid-inducible transcription. In Nicotiana tabacum (Common tobacco), this protein is TGACG-sequence-specific DNA-binding protein TGA-2.1 (TGA21).